A 312-amino-acid polypeptide reads, in one-letter code: Zinc import ATP-binding protein ZnuC (312 aa).

The ABC transporter domain occupies 13–228 (VSLEDVGVLR…PEYVRLFGSR (216 aa)). 45–52 (GPNGSGKS) lines the ATP pocket. Residues 241-312 (DHTHLPDGRV…HSRSGEGRHA (72 aa)) form a disordered region. The span at 243–312 (THLPDGRVLH…HSRSGEGRHA (70 aa)) shows a compositional bias: basic and acidic residues.

This sequence belongs to the ABC transporter superfamily. Zinc importer (TC 3.A.1.15.5) family. As to quaternary structure, the complex is composed of two ATP-binding proteins (ZnuC), two transmembrane proteins (ZnuB) and a solute-binding protein (ZnuA).

The protein resides in the cell inner membrane. It catalyses the reaction Zn(2+)(out) + ATP(in) + H2O(in) = Zn(2+)(in) + ADP(in) + phosphate(in) + H(+)(in). Its function is as follows. Part of the ABC transporter complex ZnuABC involved in zinc import. Responsible for energy coupling to the transport system. In Rhizobium etli (strain ATCC 51251 / DSM 11541 / JCM 21823 / NBRC 15573 / CFN 42), this protein is Zinc import ATP-binding protein ZnuC.